We begin with the raw amino-acid sequence, 473 residues long: Photosystem II CP43 reaction center protein (473 aa).

A propeptide spanning residues 1-14 (MKILYSLRRYFHVE) is cleaved from the precursor. The residue at position 15 (Thr-15) is an N-acetylthreonine. Thr-15 bears the Phosphothreonine mark. The next 5 membrane-spanning stretches (helical) occupy residues 69-93 (LFEV…PHLA), 134-155 (LIGP…KDKN), 178-200 (KAIW…RKIT), 255-275 (KPFA…LSYS), and 291-312 (WFNN…ASQA). Glu-367 contributes to the [CaMn4O5] cluster binding site. The helical transmembrane segment at 447-471 (RARAAAAGFEKGIDRDSEPVLYMEP) threads the bilayer.

Belongs to the PsbB/PsbC family. PsbC subfamily. In terms of assembly, PSII is composed of 1 copy each of membrane proteins PsbA, PsbB, PsbC, PsbD, PsbE, PsbF, PsbH, PsbI, PsbJ, PsbK, PsbL, PsbM, PsbT, PsbX, PsbY, PsbZ, Psb30/Ycf12, at least 3 peripheral proteins of the oxygen-evolving complex and a large number of cofactors. It forms dimeric complexes. Requires Binds multiple chlorophylls and provides some of the ligands for the Ca-4Mn-5O cluster of the oxygen-evolving complex. It may also provide a ligand for a Cl- that is required for oxygen evolution. PSII binds additional chlorophylls, carotenoids and specific lipids. as cofactor.

Its subcellular location is the plastid. The protein resides in the chloroplast thylakoid membrane. Its function is as follows. One of the components of the core complex of photosystem II (PSII). It binds chlorophyll and helps catalyze the primary light-induced photochemical processes of PSII. PSII is a light-driven water:plastoquinone oxidoreductase, using light energy to abstract electrons from H(2)O, generating O(2) and a proton gradient subsequently used for ATP formation. The protein is Photosystem II CP43 reaction center protein of Chara vulgaris (Common stonewort).